We begin with the raw amino-acid sequence, 270 residues long: Hydroxyethylthiazole kinase (270 aa).

M47 contributes to the substrate binding site. Residues R123 and T169 each coordinate ATP. Residue G196 participates in substrate binding.

This sequence belongs to the Thz kinase family. Mg(2+) serves as cofactor.

The enzyme catalyses 5-(2-hydroxyethyl)-4-methylthiazole + ATP = 4-methyl-5-(2-phosphooxyethyl)-thiazole + ADP + H(+). The protein operates within cofactor biosynthesis; thiamine diphosphate biosynthesis; 4-methyl-5-(2-phosphoethyl)-thiazole from 5-(2-hydroxyethyl)-4-methylthiazole: step 1/1. In terms of biological role, catalyzes the phosphorylation of the hydroxyl group of 4-methyl-5-beta-hydroxyethylthiazole (THZ). The sequence is that of Hydroxyethylthiazole kinase from Roseiflexus sp. (strain RS-1).